The sequence spans 63 residues: Large ribosomal subunit protein bL28 (63 aa).

The segment at 1–20 (MSKRCAITGKGPMVGNNVSH) is disordered.

The protein belongs to the bacterial ribosomal protein bL28 family.

The sequence is that of Large ribosomal subunit protein bL28 from Campylobacter fetus subsp. fetus (strain 82-40).